The chain runs to 237 residues: Uridylate kinase (237 aa).

9 to 12 (KLSG) provides a ligand contact to ATP. Residues 17–22 (GSQGYG) form an involved in allosteric activation by GTP region. Gly51 is a UMP binding site. Gly52 and Arg56 together coordinate ATP. Residues Asp71 and 132–139 (CGNPFFTT) contribute to the UMP site. ATP is bound by residues Thr159, Tyr165, and Asp168.

This sequence belongs to the UMP kinase family. As to quaternary structure, homohexamer.

The protein resides in the cytoplasm. It carries out the reaction UMP + ATP = UDP + ADP. The protein operates within pyrimidine metabolism; CTP biosynthesis via de novo pathway; UDP from UMP (UMPK route): step 1/1. Its activity is regulated as follows. Allosterically activated by GTP. Inhibited by UTP. Catalyzes the reversible phosphorylation of UMP to UDP. In Synechococcus sp. (strain CC9902), this protein is Uridylate kinase.